We begin with the raw amino-acid sequence, 319 residues long: Protein sprouty homolog 1 (319 aa).

Methionine 1 bears the N-acetylmethionine mark. Disordered stretches follow at residues 54 to 78 (TEGP…ERTH) and 100 to 160 (AVLP…QPKQ). Basic and acidic residues predominate over residues 69–78 (PRQEKHERTH). Low complexity predominate over residues 112–131 (SRSTSTGSAASSGSNSSASS). The region spanning 183–295 (QCGKCKCGEC…CYDWIHRPGC (113 aa)) is the SPR domain.

The protein belongs to the sprouty family. In terms of assembly, forms heterodimers with SPRY2. Interacts with TESK1. Interacts with CAV1 (via C-terminus).

The protein localises to the cytoplasm. The protein resides in the membrane. Inhibits fibroblast growth factor (FGF)-induced retinal lens fiber differentiation, probably by inhibiting FGF-mediated phosphorylation of ERK1/2. Inhibits TGFB-induced epithelial-to-mesenchymal transition in lens epithelial cells. This Homo sapiens (Human) protein is Protein sprouty homolog 1 (SPRY1).